Consider the following 618-residue polypeptide: Membrane protein insertase YidC (618 aa).

6 helical membrane-spanning segments follow: residues 3-23 (KNTI…SFLS), 363-383 (WGLS…IVVF), 439-459 (LPML…PSAI), 478-498 (FITF…FCLL), 520-540 (PQMA…LFVL), and 545-565 (SGLN…MIIL).

This sequence belongs to the OXA1/ALB3/YidC family. Type 1 subfamily. In terms of assembly, interacts with the Sec translocase complex via SecD. Specifically interacts with transmembrane segments of nascent integral membrane proteins during membrane integration.

The protein resides in the cell inner membrane. Its function is as follows. Required for the insertion and/or proper folding and/or complex formation of integral membrane proteins into the membrane. Involved in integration of membrane proteins that insert both dependently and independently of the Sec translocase complex, as well as at least some lipoproteins. Aids folding of multispanning membrane proteins. This chain is Membrane protein insertase YidC, found in Bacteroides fragilis (strain ATCC 25285 / DSM 2151 / CCUG 4856 / JCM 11019 / LMG 10263 / NCTC 9343 / Onslow / VPI 2553 / EN-2).